The chain runs to 510 residues: Solute carrier family 2, facilitated glucose transporter member 2 (510 aa).

Topologically, residues 1-10 (MTEDKVTGTL) are cytoplasmic. A helical membrane pass occupies residues 11-31 (VLAVFTAVLSSFQFGYDIGVI). The Extracellular portion of the chain corresponds to 32–96 (NAPQQVIITH…SASLITMFWS (65 aa)). A glycan (N-linked (GlcNAc...) asparagine) is linked at Asn62. Residues 97–117 (LSVSSFAVGGMIASFFGGLLG) traverse the membrane as a helical segment. Topologically, residues 118-122 (DKLGR) are cytoplasmic. A helical transmembrane segment spans residues 123–143 (IKALLVANILSLVGALLMGFS). Residues 144–157 (KLGPSHILIISGRG) lie on the Extracellular side of the membrane. Residues 158-178 (ISGLYCGLISGLIPMYIGEIA) form a helical membrane-spanning segment. Residues 179 to 191 (PTTLRGAIGALHQ) are Cytoplasmic-facing. Gln191 provides a ligand contact to D-glucose. A helical transmembrane segment spans residues 192–212 (LAIVTGILISQIVGLDFILGN). Topologically, residues 213–215 (HEL) are extracellular. A helical membrane pass occupies residues 216 to 236 (WHILLGLSAVPAILQCLLLFF). The Cytoplasmic portion of the chain corresponds to 237–301 (CPESPRYLYI…LFTNASYRQP (65 aa)). The chain crosses the membrane as a helical span at residues 302–322 (ILVALMLHAAQQFSGINGIFY). D-glucose contacts are provided by residues 312-313 (QQ) and Asn318. Residues 323-336 (YSTSIFQTAGISQP) are Extracellular-facing. Residues 337–357 (VYATIGVGAVNTVFTAVSVFL) form a helical membrane-spanning segment. Asn347 is a binding site for D-glucose. Over 358–365 (VEKAGRRS) the chain is Cytoplasmic. A helical membrane pass occupies residues 366 to 386 (LFLIGMSGMFVCAIFMSVGLV). The Extracellular portion of the chain corresponds to 387 to 400 (LLSKFPWMNYVSMT). The helical transmembrane segment at 401–421 (AIFLFVSFFEIGPGPIPWFMV) threads the bilayer. D-glucose is bound by residues Glu410 and Trp418. Residues 422-431 (AEFFSQGPRP) lie on the Cytoplasmic side of the membrane. A helical membrane pass occupies residues 432-452 (AALAIAAFSNWTGNFIIALCF). The Extracellular portion of the chain corresponds to 453–454 (QY). The chain crosses the membrane as a helical span at residues 455 to 475 (IADFCGPYVFFLLLVWSWPLF). Topologically, residues 476–510 (CSHFLKFQKPKENPLRKSQQSSERRGVQLKRQKLL) are cytoplasmic. The disordered stretch occupies residues 490–510 (LRKSQQSSERRGVQLKRQKLL).

The protein belongs to the major facilitator superfamily. Sugar transporter (TC 2.A.1.1) family. Glucose transporter subfamily. Post-translationally, N-glycosylated; required for stability and retention at the cell surface of pancreatic beta cells.

The protein localises to the cell membrane. It carries out the reaction D-glucose(out) = D-glucose(in). The catalysed reaction is D-fructose(out) = D-fructose(in). The enzyme catalyses L-dehydroascorbate(out) = L-dehydroascorbate(in). It catalyses the reaction D-galactose(in) = D-galactose(out). D-glucose and maltose competitively inhibit fructose transport. D-glucose, D-fructose and maltose inhibit deoxyglucose transport. Functionally, facilitative hexose transporter that mediates the transport of glucose, fructose and galactose. Likely mediates the bidirectional transfer of glucose across the plasma membrane of hepatocytes and is responsible for uptake of glucose by the beta cells; may comprise part of the glucose-sensing mechanism of the beta cell. May also participate with the Na(+)/glucose cotransporter in the transcellular transport of glucose in the small intestine and kidney. Also able to mediate the transport of dehydroascorbate. In Bos taurus (Bovine), this protein is Solute carrier family 2, facilitated glucose transporter member 2.